Here is a 378-residue protein sequence, read N- to C-terminus: MKFEVIQKSGGSRARLGRLLTPHGVVETPCFMPVGTSATVKAIFPKDLEEEGIKLILANAYHLLFRPGISVIKEFGGLHQFMGWNGAILTDSGGFQVFSLSPFCKIFPEGVRFKSPVDGSFLMLTPESAIHAQMELGSDIVMSLDHCPPWPSKEKDLLEATRRTIQWAKRGKETWMQQQEKLFSKPSASYSLFGIIQGGTDERLRLYCSEELMKIGFDGYAIGGLSVGEPHEESLAVVKTVSSFLDEKAPKYVMGMGQPWQIVQMVDLGIDLFDCVLPTRLARHGSAYVEEGIIHIKNARFRKDGSPLDSRCSCYACRKFSRGYIHHLLKSKEILGIMLLSMHNLLFYNRLMKEIRSFLAHGQWVDFLARWKDKKVTK.

The active-site Proton acceptor is the Asp-91. Residues Asp-91–Phe-95, Asp-145, Gln-197, and Gly-224 contribute to the substrate site. Catalysis depends on Asp-274, which acts as the Nucleophile. Residues Thr-279–Arg-283 are RNA binding; important for wobble base 34 recognition. Cys-312, Cys-314, Cys-317, and His-343 together coordinate Zn(2+).

The protein belongs to the queuine tRNA-ribosyltransferase family. As to quaternary structure, homodimer. Within each dimer, one monomer is responsible for RNA recognition and catalysis, while the other monomer binds to the replacement base PreQ1. It depends on Zn(2+) as a cofactor.

It catalyses the reaction 7-aminomethyl-7-carbaguanine + guanosine(34) in tRNA = 7-aminomethyl-7-carbaguanosine(34) in tRNA + guanine. It functions in the pathway tRNA modification; tRNA-queuosine biosynthesis. Functionally, catalyzes the base-exchange of a guanine (G) residue with the queuine precursor 7-aminomethyl-7-deazaguanine (PreQ1) at position 34 (anticodon wobble position) in tRNAs with GU(N) anticodons (tRNA-Asp, -Asn, -His and -Tyr). Catalysis occurs through a double-displacement mechanism. The nucleophile active site attacks the C1' of nucleotide 34 to detach the guanine base from the RNA, forming a covalent enzyme-RNA intermediate. The proton acceptor active site deprotonates the incoming PreQ1, allowing a nucleophilic attack on the C1' of the ribose to form the product. After dissociation, two additional enzymatic reactions on the tRNA convert PreQ1 to queuine (Q), resulting in the hypermodified nucleoside queuosine (7-(((4,5-cis-dihydroxy-2-cyclopenten-1-yl)amino)methyl)-7-deazaguanosine). The chain is Queuine tRNA-ribosyltransferase from Methylacidiphilum infernorum (isolate V4) (Methylokorus infernorum (strain V4)).